Consider the following 211-residue polypeptide: MHNEHIEEHFNNRNVTELSSEYYMVDIAPYPTDGWGKFTRTLRRAIRGELFVGLWVVLREMIRFDIHTIQYPLEKMPIGPRYRAVHEMKRLWESDTERCIGCGLCEKICISNCIRIDTKLDENSRKEVTEYSINLGRCIFCGYCAEVCPELAITHGGEYENASDQREHFIMYQDMLTPLDKMKAGTQKEFEGFGAITPHEDERVKKTPLAY.

2 consecutive 4Fe-4S ferredoxin-type domains span residues 90–119 (RLWE…IDTK) and 129–158 (TEYS…HGGE). Residues Cys99, Cys102, Cys105, Cys109, Cys138, Cys141, Cys144, and Cys148 each coordinate [4Fe-4S] cluster.

Belongs to the complex I 23 kDa subunit family. As to quaternary structure, NDH-1 is composed of 14 different subunits. Subunits NuoA, H, J, K, L, M, N constitute the membrane sector of the complex. It depends on [4Fe-4S] cluster as a cofactor.

The protein resides in the cell inner membrane. The catalysed reaction is a quinone + NADH + 5 H(+)(in) = a quinol + NAD(+) + 4 H(+)(out). Its function is as follows. NDH-1 shuttles electrons from NADH, via FMN and iron-sulfur (Fe-S) centers, to quinones in the respiratory chain. The immediate electron acceptor for the enzyme in this species is believed to be ubiquinone. Couples the redox reaction to proton translocation (for every two electrons transferred, four hydrogen ions are translocated across the cytoplasmic membrane), and thus conserves the redox energy in a proton gradient. The chain is NADH-quinone oxidoreductase subunit I from Sulfurimonas denitrificans (strain ATCC 33889 / DSM 1251) (Thiomicrospira denitrificans (strain ATCC 33889 / DSM 1251)).